Here is a 246-residue protein sequence, read N- to C-terminus: tRNA pseudouridine synthase A (246 aa).

Asp53 acts as the Nucleophile in catalysis. Tyr112 is a binding site for substrate.

Belongs to the tRNA pseudouridine synthase TruA family. Homodimer.

It carries out the reaction uridine(38/39/40) in tRNA = pseudouridine(38/39/40) in tRNA. In terms of biological role, formation of pseudouridine at positions 38, 39 and 40 in the anticodon stem and loop of transfer RNAs. In Anaplasma phagocytophilum (strain HZ), this protein is tRNA pseudouridine synthase A.